A 566-amino-acid polypeptide reads, in one-letter code: MNIFKQISSLISSKLNELKQRGVINTSAENFIVEPPSNRAHGDIYTNVAMVLAKHEKKNPIEIAGILAREFKPFDEVAEVEIASPGFINMHLKIEVWHGILKQINELKTEFGTLNIGNNQAVNVEFVSANPTGPLHIGHARGAVFGDVLANLLKKVGYNVTKEYYINDAGAQIDTLIRSVYLRYKEALGEKISIEKGLYPGEYLKPIGEGLAKKYGKELRAEEDNQIIREYTLSSILELIKEDMSLLGVNHDVFTSEYELRGKIEESIKILSDKGLVYEGYLEKPKGKESENWTSRKEMLFRSTKFGDDVDRALKKEDGSWTYFASDIAYHFDKISRGFNNMIVELGSDHGGYVKRLKAVVSALSDDQAKIEVKLHNIVNFFENEKPVKMSKRSGNFLTARDVVEEVGRDITRFIMLTRKNDMVLDFDFAKVKEQSKDNPIFYVQYAHARAHSLMRNAPKELPTADPSLLKTDGELFLIKILAKWPDVVEIAARLYEPHRITFYLLEVAEAFHVLWGYGKSDLNMRFILEDNLNLTAARMFLVQALAHVIASGLSIFNIEPLKEMC.

A 'HIGH' region motif is present at residues 129–139; that stretch reads ANPTGPLHIGH.

The protein belongs to the class-I aminoacyl-tRNA synthetase family. As to quaternary structure, monomer.

Its subcellular location is the cytoplasm. The enzyme catalyses tRNA(Arg) + L-arginine + ATP = L-arginyl-tRNA(Arg) + AMP + diphosphate. In Wolbachia pipientis subsp. Culex pipiens (strain wPip), this protein is Arginine--tRNA ligase.